We begin with the raw amino-acid sequence, 333 residues long: 4-hydroxyproline 2-epimerase (333 aa).

The active-site Proton acceptor is the Cys-91. Substrate is bound by residues 92–93, His-225, and Asp-250; that span reads GH. Catalysis depends on Cys-254, which acts as the Proton donor. Residue 255–256 participates in substrate binding; it reads GT.

This sequence belongs to the proline racemase family.

The enzyme catalyses trans-4-hydroxy-L-proline = cis-4-hydroxy-D-proline. Functionally, catalyzes the epimerization of trans-4-hydroxy-L-proline (t4LHyp) to cis-4-hydroxy-D-proline (c4DHyp). Is likely involved in a degradation pathway that converts t4LHyp to alpha-ketoglutarate. Displays no proline racemase activity. The protein is 4-hydroxyproline 2-epimerase of Streptosporangium roseum (strain ATCC 12428 / DSM 43021 / JCM 3005 / KCTC 9067 / NCIMB 10171 / NRRL 2505 / NI 9100).